A 440-amino-acid polypeptide reads, in one-letter code: 3-phosphoshikimate 1-carboxyvinyltransferase (440 aa).

3-phosphoshikimate-binding residues include Lys19, Ser20, and Arg24. Lys19 is a phosphoenolpyruvate binding site. Phosphoenolpyruvate contacts are provided by Gly92 and Arg121. The 3-phosphoshikimate site is built by Ser166, Gln168, Asp315, and Lys342. Position 168 (Gln168) interacts with phosphoenolpyruvate. Asp315 (proton acceptor) is an active-site residue. 2 residues coordinate phosphoenolpyruvate: Arg346 and Arg399.

Belongs to the EPSP synthase family. Monomer.

The protein localises to the cytoplasm. The catalysed reaction is 3-phosphoshikimate + phosphoenolpyruvate = 5-O-(1-carboxyvinyl)-3-phosphoshikimate + phosphate. The protein operates within metabolic intermediate biosynthesis; chorismate biosynthesis; chorismate from D-erythrose 4-phosphate and phosphoenolpyruvate: step 6/7. Catalyzes the transfer of the enolpyruvyl moiety of phosphoenolpyruvate (PEP) to the 5-hydroxyl of shikimate-3-phosphate (S3P) to produce enolpyruvyl shikimate-3-phosphate and inorganic phosphate. The sequence is that of 3-phosphoshikimate 1-carboxyvinyltransferase from Leptospira interrogans serogroup Icterohaemorrhagiae serovar Lai (strain 56601).